The chain runs to 99 residues: Turripeptide OL71 (99 aa).

Contains 5 disulfide bonds. Expressed by the venom duct.

The protein resides in the secreted. Functionally, acts as a neurotoxin by inhibiting an ion channel. The polypeptide is Turripeptide OL71 (Iotyrris olangoensis (Sea snail)).